We begin with the raw amino-acid sequence, 179 residues long: Large ribosomal subunit protein uL5 (179 aa).

Belongs to the universal ribosomal protein uL5 family. In terms of assembly, part of the 50S ribosomal subunit; part of the 5S rRNA/L5/L18/L25 subcomplex. Contacts the 5S rRNA and the P site tRNA. Forms a bridge to the 30S subunit in the 70S ribosome.

In terms of biological role, this is one of the proteins that bind and probably mediate the attachment of the 5S RNA into the large ribosomal subunit, where it forms part of the central protuberance. In the 70S ribosome it contacts protein S13 of the 30S subunit (bridge B1b), connecting the 2 subunits; this bridge is implicated in subunit movement. Contacts the P site tRNA; the 5S rRNA and some of its associated proteins might help stabilize positioning of ribosome-bound tRNAs. This is Large ribosomal subunit protein uL5 from Rhodospirillum rubrum (strain ATCC 11170 / ATH 1.1.1 / DSM 467 / LMG 4362 / NCIMB 8255 / S1).